A 395-amino-acid polypeptide reads, in one-letter code: Sulfate adenylyltransferase (395 aa).

This sequence belongs to the sulfate adenylyltransferase family.

The enzyme catalyses sulfate + ATP + H(+) = adenosine 5'-phosphosulfate + diphosphate. Its pathway is sulfur metabolism; hydrogen sulfide biosynthesis; sulfite from sulfate: step 1/3. This is Sulfate adenylyltransferase from Synechococcus elongatus (strain ATCC 33912 / PCC 7942 / FACHB-805) (Anacystis nidulans R2).